We begin with the raw amino-acid sequence, 248 residues long: Homeobox protein CHOX-CAD (248 aa).

The segment at residues 137 to 196 (KDKYRVVYTDHQRLELEKEFHYSRYITIRRKAELAAALGLTERQVKIWFQNRRAKERKVN) is a DNA-binding region (homeobox). The interval 192–248 (ERKVNKKKLQQQSQPTSTTTPTPPAVGTPGPMGTLCSGSAPSLVSSSPLTIKEEFMP) is disordered. Composition is skewed to low complexity over residues 201–211 (QQQSQPTSTTT) and 228–240 (SGSA…SSPL).

Belongs to the Caudal homeobox family.

The protein localises to the nucleus. Functionally, may play an important role during the early steps of organogenesis. This chain is Homeobox protein CHOX-CAD (CHOX-CAD1), found in Gallus gallus (Chicken).